The following is a 122-amino-acid chain: MIQTESRLQVADNTGASEVLCIKVLGGSERRYASIGDVIKVSVKSAAPRGRVKKGDIYNAVVVRTAKGVRRPDGSLIKFDGNAAVLLNAKLEPIGTRIFGPVTRELRTEKFMKIVSLAPEVI.

Belongs to the universal ribosomal protein uL14 family. In terms of assembly, part of the 50S ribosomal subunit. Forms a cluster with proteins L3 and L19. In the 70S ribosome, L14 and L19 interact and together make contacts with the 16S rRNA in bridges B5 and B8.

Its function is as follows. Binds to 23S rRNA. Forms part of two intersubunit bridges in the 70S ribosome. In Polynucleobacter necessarius subsp. necessarius (strain STIR1), this protein is Large ribosomal subunit protein uL14.